The primary structure comprises 187 residues: ATP synthase subunit b, chloroplastic (187 aa).

Residues 34–56 traverse the membrane as a helical segment; it reads IINLSVVLGLVFTLGRNFLISLL.

Belongs to the ATPase B chain family. In terms of assembly, F-type ATPases have 2 components, F(1) - the catalytic core - and F(0) - the membrane proton channel. F(1) has five subunits: alpha(3), beta(3), gamma(1), delta(1), epsilon(1). F(0) has four main subunits: a(1), b(1), b'(1) and c(10-14). The alpha and beta chains form an alternating ring which encloses part of the gamma chain. F(1) is attached to F(0) by a central stalk formed by the gamma and epsilon chains, while a peripheral stalk is formed by the delta, b and b' chains.

The protein resides in the plastid. Its subcellular location is the chloroplast thylakoid membrane. In terms of biological role, f(1)F(0) ATP synthase produces ATP from ADP in the presence of a proton or sodium gradient. F-type ATPases consist of two structural domains, F(1) containing the extramembraneous catalytic core and F(0) containing the membrane proton channel, linked together by a central stalk and a peripheral stalk. During catalysis, ATP synthesis in the catalytic domain of F(1) is coupled via a rotary mechanism of the central stalk subunits to proton translocation. Its function is as follows. Component of the F(0) channel, it forms part of the peripheral stalk, linking F(1) to F(0). This is ATP synthase subunit b, chloroplastic from Pleurastrum terricola (Filamentous green alga).